Reading from the N-terminus, the 90-residue chain is Small ribosomal subunit protein mS37 (90 aa).

Cys-27 and Cys-58 form a disulfide bridge.

Belongs to the mitochondrion-specific ribosomal protein mS37 family. In terms of assembly, component of the mitochondrial small ribosomal subunit (mt-SSU). Mature N.crassa 74S mitochondrial ribosomes consist of a small (37S) and a large (54S) subunit. The 37S small subunit contains a 16S ribosomal RNA (16S mt-rRNA) and 32 different proteins. The 54S large subunit contains a 23S rRNA (23S mt-rRNA) and 42 different proteins.

It is found in the mitochondrion. In terms of biological role, component of the mitochondrial ribosome (mitoribosome), a dedicated translation machinery responsible for the synthesis of mitochondrial genome-encoded proteins, including at least some of the essential transmembrane subunits of the mitochondrial respiratory chain. The mitoribosomes are attached to the mitochondrial inner membrane and translation products are cotranslationally integrated into the membrane. The sequence is that of Small ribosomal subunit protein mS37 (mrp10) from Neurospora crassa (strain ATCC 24698 / 74-OR23-1A / CBS 708.71 / DSM 1257 / FGSC 987).